Reading from the N-terminus, the 681-residue chain is PTS system glucose-specific EIICBA component (681 aa).

One can recognise a PTS EIIC type-1 domain in the interval 3 to 414 (KKLFGQLQRI…LKYKTPGRED (412 aa)). A run of 10 helical transmembrane segments spans residues 16-36 (LMLPVAILPAAGLLLAIGTAI), 73-93 (MIFALGVAIGLAGGDGVAAIA), 126-146 (ILGIPTLQTGVFGGIIIGALA), 170-190 (FVPIMMATTSFILAFPMALIW), 199-219 (AFSTGLLDSNTGVAVFLFGFI), 273-293 (FMQGEFPVMMFGLPAAALAIY), 303-323 (VVAGLMGSAALTSFLTGITEP), 328-348 (FLFVAPLLFFIHAVLDGLSFL), 355-375 (VHLGYTFSGGFIDYVLLGVLP), and 383-403 (VIPVGLVYAVIYYFVFRFLIV). The PTS EIIB type-1 domain maps to 425–506 (TELPYAVLEA…QQIMNGQVVE (82 aa)). C447 (phosphocysteine intermediate; for EIIB activity) is an active-site residue. A PTS EIIA type-1 domain is found at 551-655 (DQVFSEKMMG…SDITPIIVTQ (105 aa)). The Tele-phosphohistidine intermediate; for EIIA activity role is filled by H603.

It is found in the cell membrane. The enzyme catalyses N(pros)-phospho-L-histidyl-[protein] + D-glucose(out) = D-glucose 6-phosphate(in) + L-histidyl-[protein]. In terms of biological role, the phosphoenolpyruvate-dependent sugar phosphotransferase system (sugar PTS), a major carbohydrate active transport system, catalyzes the phosphorylation of incoming sugar substrates concomitantly with their translocation across the cell membrane. This system is involved in glucose transport. This Staphylococcus aureus (strain JH9) protein is PTS system glucose-specific EIICBA component (ptsG).